A 694-amino-acid polypeptide reads, in one-letter code: MARPVPIEKLRNIGIVAHIDAGKTTTTERILFYTGKTYKIGEVHEGAATMDWMEQEKERGITITSATTAAYWKGYQLNIIDTPGHVDFGVEVVRSMKALDGIVFVFSSVEAVQPQSEANWRWADKFGVPRIAFVNKMDRTGADFFKVYDDIIEKLGAKPVPIQVPIGSEENFEGIVDLFEMKAYIWRGDELGAKYDVTDDIPSDVLPVAEEWREKMIEAIVETDEELMEKYLEGEELSVEDLKKALRKATISRELVPMLCGSAFKNKGVQPLLDAVIDFLPSPVDVPPVKGVNPDTGEEEERHASDNEPFCALAFKVMADPYAGQLTYFRVYSGVIKAGDTILIANKNKKVRVGRILRMHANQREEITEVHAGDIAAAVGLDTVTGDTLSDPNHPIVLESMEFPEPVIAMAIEPKTKSDQEKLSQVLNKFMKEDPTFKVTVDPETNQTLIHGMGELHLEIMVDRMKREYGIEVNVGKPQVAYKETIKKKAVGEGKFIRQSGGRGQYGHAIIEIEPLAEKDYEFVDKIVGGVIPKEFIPAVDAGIQEAMQSGVVAGYPMIGVKATLFDGSFHEVDSSEIAFKIAGSMAFREAAKKANPVLLEPIMLVEVDTPEEYMGDVMGDLSKRRGKILGSEKKGTTMTIKAEVPLAEMFGYATDLRSLTQGRATFSMVFEKYEEVPKNIADEIAGAKAKAES.

Positions 8 to 284 (EKLRNIGIVA…AVIDFLPSPV (277 aa)) constitute a tr-type G domain. GTP is bound by residues 17-24 (AHIDAGKT), 81-85 (DTPGH), and 135-138 (NKMD).

Belongs to the TRAFAC class translation factor GTPase superfamily. Classic translation factor GTPase family. EF-G/EF-2 subfamily.

The protein localises to the cytoplasm. Functionally, catalyzes the GTP-dependent ribosomal translocation step during translation elongation. During this step, the ribosome changes from the pre-translocational (PRE) to the post-translocational (POST) state as the newly formed A-site-bound peptidyl-tRNA and P-site-bound deacylated tRNA move to the P and E sites, respectively. Catalyzes the coordinated movement of the two tRNA molecules, the mRNA and conformational changes in the ribosome. In Persephonella marina (strain DSM 14350 / EX-H1), this protein is Elongation factor G.